The sequence spans 458 residues: Argininosuccinate lyase (458 aa).

The protein belongs to the lyase 1 family. Argininosuccinate lyase subfamily.

Its subcellular location is the cytoplasm. The enzyme catalyses 2-(N(omega)-L-arginino)succinate = fumarate + L-arginine. The protein operates within amino-acid biosynthesis; L-arginine biosynthesis; L-arginine from L-ornithine and carbamoyl phosphate: step 3/3. The chain is Argininosuccinate lyase from Geotalea daltonii (strain DSM 22248 / JCM 15807 / FRC-32) (Geobacter daltonii).